Reading from the N-terminus, the 834-residue chain is Protein argonaute (834 aa).

In terms of domain architecture, PAZ spans 210–326 (SLLQILMEYT…LPIEFCFVVK (117 aa)). Residues 500–799 (YLFFILDKNS…VSNLARYQDV (300 aa)) enclose the Piwi domain.

It belongs to the argonaute family. Ago subfamily. As to quaternary structure, ago1, chp1 and tas3 interact to form the core of the RNA-induced transcriptional silencing (RITS) complex. The RITS complex interacts with the RDRC complex via interaction between ago1 and hrr1. Clr4 has a role in mediating this interaction. Component of the argonaute siRNA chaperone (ARC) complex composed of ago1, arb1 and arb2. Interacts with arb1.

The protein resides in the cytoplasm. The protein localises to the nucleus. It localises to the chromosome. It is found in the centromere. Its subcellular location is the telomere. In terms of biological role, required for G1 arrest and mating in response to nitrogen starvation. Ago1 regulation of cytokinesis and cell cycle checkpoints occurs downstream of dcr1. Required, indirectly, for regulated hyperphosphorylation of cdc2. Has a role in the RNA interference (RNAi) pathway which is important for heterochromatin formation, accurate chromosome segregation, centromere cohesion and telomere function during mitosis and meiosis. Required for silencing at the centromeres and for initiation of transcriptionally silent heterochromatin at the mating type locus. Promotes histone H3K9 methylation necessary for centromere function. Required for recruitment of swi6 and cohesin to an ectopic dg repeat. A member of the RNA-induced transcriptional silencing (RITS) complex which is involved in the biosynthesis of dsRNA from primer siRNAs provided by the RNA-directed RNA polymerase (RDRC) complex. Has ribonuclease H-like cleavage (slicing) activity towards target messages complementary to siRNA and can direct site-specific cleavage of RNA substrates via siRNA. Slicing activity is required for both post-transcriptional and transcriptional gene silencing as well as for histone H3 'Lys-10' methylation spreading, conversion of double-stranded siRNA to single-stranded siRNA and siRNA-dependent association of ago1 with chromatin. A member of the argonaute siRNA chaperone (ARC) complex which is required for histone H3K9 methylation, heterochromatin assembly and siRNA generation. The ARC complex contains mostly double-stranded siRNA. The chain is Protein argonaute (ago1) from Schizosaccharomyces pombe (strain 972 / ATCC 24843) (Fission yeast).